The sequence spans 105 residues: NADH-quinone oxidoreductase subunit K (105 aa).

3 helical membrane-spanning segments follow: residues 8–28 (VTNG…GIII), 33–53 (ILIL…NFLI), and 65–85 (VFVF…LAIV).

This sequence belongs to the complex I subunit 4L family. As to quaternary structure, NDH-1 is composed of 14 different subunits. Subunits NuoA, H, J, K, L, M, N constitute the membrane sector of the complex.

It is found in the cell inner membrane. The enzyme catalyses a quinone + NADH + 5 H(+)(in) = a quinol + NAD(+) + 4 H(+)(out). NDH-1 shuttles electrons from NADH, via FMN and iron-sulfur (Fe-S) centers, to quinones in the respiratory chain. The immediate electron acceptor for the enzyme in this species is believed to be ubiquinone. Couples the redox reaction to proton translocation (for every two electrons transferred, four hydrogen ions are translocated across the cytoplasmic membrane), and thus conserves the redox energy in a proton gradient. The polypeptide is NADH-quinone oxidoreductase subunit K (Francisella philomiragia subsp. philomiragia (strain ATCC 25017 / CCUG 19701 / FSC 153 / O#319-036)).